A 353-amino-acid polypeptide reads, in one-letter code: UPF0658 Golgi apparatus membrane protein C23H3.04 (353 aa).

Helical transmembrane passes span 39–59 (IFFL…EGYC), 76–96 (SLPI…YLCV), 103–123 (NIIE…YSIV), 172–192 (PFLI…GFLA), 226–246 (LLKI…MVLP), 249–269 (AVVE…ILTL), 281–301 (LMMT…FKII), and 318–338 (MITT…AIGF).

Belongs to the UPF0658 family.

The protein resides in the golgi apparatus membrane. The sequence is that of UPF0658 Golgi apparatus membrane protein C23H3.04 from Schizosaccharomyces pombe (strain 972 / ATCC 24843) (Fission yeast).